Here is a 161-residue protein sequence, read N- to C-terminus: MKERAAFSHMTEDGAVTMVDVGHKNPTQRTAIVRAVVEVSAATLDLLKHRALPKGDVLTTAKIAGIMAAKRTAELIPMCHPLAISYADVRFEVRDTPPSIALEAEVRTTGQTGVEMEALIAAQTAAATIYDMCKAVQKDIVIRDCRLVFKSGGKSGTFRAE.

Substrate is bound by residues 78–80 (MCH) and 116–117 (ME). Residue Asp-131 is part of the active site.

Belongs to the MoaC family. Homohexamer; trimer of dimers.

The catalysed reaction is (8S)-3',8-cyclo-7,8-dihydroguanosine 5'-triphosphate = cyclic pyranopterin phosphate + diphosphate. It participates in cofactor biosynthesis; molybdopterin biosynthesis. In terms of biological role, catalyzes the conversion of (8S)-3',8-cyclo-7,8-dihydroguanosine 5'-triphosphate to cyclic pyranopterin monophosphate (cPMP). In Nitratidesulfovibrio vulgaris (strain ATCC 29579 / DSM 644 / CCUG 34227 / NCIMB 8303 / VKM B-1760 / Hildenborough) (Desulfovibrio vulgaris), this protein is Cyclic pyranopterin monophosphate synthase.